The chain runs to 472 residues: Adenosylhomocysteinase (472 aa).

The substrate site is built by T64, D138, and E198. 199–201 is a binding site for NAD(+); that stretch reads TTT. Positions 228 and 232 each coordinate substrate. Residues N233, 262–267, E285, N320, 341–343, and N386 each bind NAD(+); these read GFGDVG and IGH.

Belongs to the adenosylhomocysteinase family. It depends on NAD(+) as a cofactor.

It is found in the cytoplasm. It carries out the reaction S-adenosyl-L-homocysteine + H2O = L-homocysteine + adenosine. The protein operates within amino-acid biosynthesis; L-homocysteine biosynthesis; L-homocysteine from S-adenosyl-L-homocysteine: step 1/1. Its function is as follows. May play a key role in the regulation of the intracellular concentration of adenosylhomocysteine. The sequence is that of Adenosylhomocysteinase from Prochlorococcus marinus (strain MIT 9312).